Reading from the N-terminus, the 606-residue chain is Kelch-like protein 26 (606 aa).

The segment covering 1 to 19 (MAESGGSSGSSQSPERPSS) has biased composition (low complexity). Residues 1–20 (MAESGGSSGSSQSPERPSSL) are disordered. Residue Ala2 is modified to N-acetylalanine. The 68-residue stretch at 54 to 121 (LDVVLTVNSE…AYSAEVTLDL (68 aa)) folds into the BTB domain. Residues 156–257 (CLHIGQMATT…QPAELVDSVQ (102 aa)) form the BACK domain. Kelch repeat units lie at residues 301 to 352 (SLVA…VLDN), 353 to 404 (FVYV…ALGG), 406 to 451 (LYAT…AAAG), 452 to 499 (RLYI…GAAG), 501 to 550 (IYAL…LLER), and 552 to 599 (IYIV…AVLL). A Phosphoserine modification is found at Ser430.

Functionally, may play a role in endo(sarco)plasmic reticulum (ER/SR) mitochondrial signaling. May be part of the ubiquitin-proteasome system (UPS) and affect ubiquitination and degradation of target substrates in cardiomyocytes. The sequence is that of Kelch-like protein 26 (Klhl26) from Mus musculus (Mouse).